Consider the following 136-residue polypeptide: Lipoprotein YghG (136 aa).

A signal peptide spans 1 to 24; the sequence is MSIKQMPGRVLISLLLSVTGLLSG. Residue cysteine 25 is the site of N-palmitoyl cysteine attachment. Residue cysteine 25 is the site of S-diacylglycerol cysteine attachment.

This sequence belongs to the GspS/AspS pilotin family.

It is found in the cell outer membrane. Functionally, involved in a type II secretion system (T2SS, formerly general secretion pathway, GSP) for the export of folded proteins across the outer membrane. In a functional T2SS this subunit helps assemble the outer membrane channel. The polypeptide is Lipoprotein YghG (yghG) (Escherichia coli (strain K12)).